Here is a 245-residue protein sequence, read N- to C-terminus: Probable phosphatase YcdX (245 aa).

Residues histidine 7, histidine 9, histidine 15, histidine 40, glutamate 73, histidine 101, histidine 131, aspartate 192, and histidine 194 each contribute to the Zn(2+) site.

The protein belongs to the PHP family. As to quaternary structure, homotrimer. Zn(2+) is required as a cofactor.

The protein is Probable phosphatase YcdX of Salmonella agona (strain SL483).